We begin with the raw amino-acid sequence, 598 residues long: Beta-fructofuranosidase, insoluble isoenzyme 2 (598 aa).

An N-terminal signal peptide occupies residues 1-25 (MGVLGSRVAWAWLVQLLLLQQLAGA). Residue D69 is part of the active site. Residues N164, N189, and N348 are each glycosylated (N-linked (GlcNAc...) asparagine).

It belongs to the glycosyl hydrolase 32 family.

It is found in the secreted. The protein localises to the extracellular space. Its subcellular location is the apoplast. It localises to the cell wall. The catalysed reaction is Hydrolysis of terminal non-reducing beta-D-fructofuranoside residues in beta-D-fructofuranosides.. In terms of biological role, may play a role in sucrose partitioning during seed development. The sequence is that of Beta-fructofuranosidase, insoluble isoenzyme 2 (CIN2) from Oryza sativa subsp. indica (Rice).